The following is a 407-amino-acid chain: Eukaryotic initiation factor 4A-II (407 aa).

The disordered stretch occupies residues 1–23; sequence MSGGSADYSRDHGGPEGMEPDGV. The Q motif motif lies at 33-61; that stretch reads DNFDDMNLKESLLRGIYAYGFEKPSAIQQ. The region spanning 64-235 is the Helicase ATP-binding domain; that stretch reads IIPCIKGYDV…KKFMREPIRI (172 aa). 77–84 lines the ATP pocket; sequence AQSGTGKT. Positions 183–186 match the DEAD box motif; it reads DEAD. Residues 246–407 form the Helicase C-terminal domain; sequence GIKQFYINVE…EMPMNVADLI (162 aa).

Belongs to the DEAD box helicase family. eIF4A subfamily. As to quaternary structure, eIF4F is a multi-subunit complex, the composition of which varies with external and internal environmental conditions. It is composed of at least EIF4A, EIF4E and EIF4G1/EIFFG3. Interacts with EIF4E.

The enzyme catalyses ATP + H2O = ADP + phosphate + H(+). In terms of biological role, ATP-dependent RNA helicase which is a subunit of the eIF4F complex involved in cap recognition and is required for mRNA binding to ribosome. In the current model of translation initiation, eIF4A unwinds RNA secondary structures in the 5'-UTR of mRNAs which is necessary to allow efficient binding of the small ribosomal subunit, and subsequent scanning for the initiator codon. This chain is Eukaryotic initiation factor 4A-II (EIF4A2), found in Gallus gallus (Chicken).